The primary structure comprises 456 residues: Glutamate--tRNA ligase 2 (456 aa).

Residues 8–18 (PSPTGYIHIGN) carry the 'HIGH' region motif. A 'KMSKS' region motif is present at residues 249-253 (GLSKR). Lys252 contacts ATP.

The protein belongs to the class-I aminoacyl-tRNA synthetase family. Glutamate--tRNA ligase type 1 subfamily. In terms of assembly, monomer.

The protein resides in the cytoplasm. It catalyses the reaction tRNA(Glu) + L-glutamate + ATP = L-glutamyl-tRNA(Glu) + AMP + diphosphate. Catalyzes the attachment of glutamate to tRNA(Glu) in a two-step reaction: glutamate is first activated by ATP to form Glu-AMP and then transferred to the acceptor end of tRNA(Glu). The sequence is that of Glutamate--tRNA ligase 2 from Bartonella bacilliformis (strain ATCC 35685 / KC583 / Herrer 020/F12,63).